We begin with the raw amino-acid sequence, 426 residues long: Mannose-1-phosphate guanyltransferase alpha-B (426 aa).

This sequence belongs to the transferase hexapeptide repeat family.

It catalyses the reaction alpha-D-mannose 1-phosphate + GTP + H(+) = GDP-alpha-D-mannose + diphosphate. Its pathway is nucleotide-sugar biosynthesis; GDP-alpha-D-mannose biosynthesis; GDP-alpha-D-mannose from alpha-D-mannose 1-phosphate (GTP route): step 1/1. The polypeptide is Mannose-1-phosphate guanyltransferase alpha-B (gmppa-b) (Xenopus laevis (African clawed frog)).